Consider the following 465-residue polypeptide: Phenylalanine--tRNA ligase alpha subunit (465 aa).

Thr-311 and Phe-389 together coordinate L-phenylalanine. A Mg(2+)-binding site is contributed by Glu-391.

This sequence belongs to the class-II aminoacyl-tRNA synthetase family. Phe-tRNA synthetase alpha subunit type 2 subfamily. As to quaternary structure, tetramer of two alpha and two beta subunits. The cofactor is Mg(2+).

It localises to the cytoplasm. It catalyses the reaction tRNA(Phe) + L-phenylalanine + ATP = L-phenylalanyl-tRNA(Phe) + AMP + diphosphate + H(+). The polypeptide is Phenylalanine--tRNA ligase alpha subunit (Metallosphaera sedula (strain ATCC 51363 / DSM 5348 / JCM 9185 / NBRC 15509 / TH2)).